The chain runs to 239 residues: MINDVISPEFDENGRALRRIRSFVRRQGRLTKGQQLALDSYWPVMGVEYQAAPVDLNTLFGREAPIVLEIGFGMGTSLVTMATNNPQQNFLGIEVHSPGVGACLSSAHDAGLSNLRIMCHDAVEVLENMIPEASLDMVQLFFPDPWHKARHNKRRIVQTPFVELVKSKLKVGGVFHMATDWQPYAEHMLEVMSGVSGYLNLSEQNDYVPRPDSRPLTKFELRGQRLGHGVWDLMFERKE.

Residues Glu69, Glu94, Asp121, and Asp144 each coordinate S-adenosyl-L-methionine. Asp144 is an active-site residue. Position 148 (Lys148) interacts with substrate. The interaction with RNA stretch occupies residues 150 to 155; sequence RHNKRR. Substrate is bound by residues Asp180 and 217–220; that span reads TKFE.

Belongs to the class I-like SAM-binding methyltransferase superfamily. TrmB family. As to quaternary structure, monomer.

It carries out the reaction guanosine(46) in tRNA + S-adenosyl-L-methionine = N(7)-methylguanosine(46) in tRNA + S-adenosyl-L-homocysteine. It functions in the pathway tRNA modification; N(7)-methylguanine-tRNA biosynthesis. Functionally, catalyzes the formation of N(7)-methylguanine at position 46 (m7G46) in tRNA. In Yersinia pestis (strain Pestoides F), this protein is tRNA (guanine-N(7)-)-methyltransferase.